The following is a 235-amino-acid chain: 7-cyano-7-deazaguanine synthase (235 aa).

Position 10–20 (10–20) interacts with ATP; sequence FSGGQDSTTCL. The Zn(2+) site is built by Cys198, Cys213, Cys216, and Cys219.

It belongs to the QueC family. It depends on Zn(2+) as a cofactor.

The catalysed reaction is 7-carboxy-7-deazaguanine + NH4(+) + ATP = 7-cyano-7-deazaguanine + ADP + phosphate + H2O + H(+). It participates in purine metabolism; 7-cyano-7-deazaguanine biosynthesis. In terms of biological role, catalyzes the ATP-dependent conversion of 7-carboxy-7-deazaguanine (CDG) to 7-cyano-7-deazaguanine (preQ(0)). This is 7-cyano-7-deazaguanine synthase from Paracidovorax citrulli (strain AAC00-1) (Acidovorax citrulli).